Here is a 95-residue protein sequence, read N- to C-terminus: Large ribosomal subunit protein uL23 (95 aa).

Belongs to the universal ribosomal protein uL23 family. In terms of assembly, part of the 50S ribosomal subunit. Contacts protein L29, and trigger factor when it is bound to the ribosome.

One of the early assembly proteins it binds 23S rRNA. One of the proteins that surrounds the polypeptide exit tunnel on the outside of the ribosome. Forms the main docking site for trigger factor binding to the ribosome. This Levilactobacillus brevis (strain ATCC 367 / BCRC 12310 / CIP 105137 / JCM 1170 / LMG 11437 / NCIMB 947 / NCTC 947) (Lactobacillus brevis) protein is Large ribosomal subunit protein uL23.